The following is a 418-amino-acid chain: Tyrosine--tRNA ligase (418 aa).

The 'HIGH' region motif lies at 42 to 51 (PTAPDLHLGH). The 'KMSKS' region signature appears at 226-230 (KMSKS). Lys-229 contacts ATP. Positions 339 to 400 (VRLVALLTKS…GKRNFAKVRL (62 aa)) constitute an S4 RNA-binding domain.

This sequence belongs to the class-I aminoacyl-tRNA synthetase family. TyrS type 2 subfamily. Homodimer.

Its subcellular location is the cytoplasm. It catalyses the reaction tRNA(Tyr) + L-tyrosine + ATP = L-tyrosyl-tRNA(Tyr) + AMP + diphosphate + H(+). Catalyzes the attachment of tyrosine to tRNA(Tyr) in a two-step reaction: tyrosine is first activated by ATP to form Tyr-AMP and then transferred to the acceptor end of tRNA(Tyr). The polypeptide is Tyrosine--tRNA ligase (Xylella fastidiosa (strain 9a5c)).